We begin with the raw amino-acid sequence, 745 residues long: MMTQAQTYFYDGSDVALLNGQYTDVFSLLGMHSINEGKALVVRCFLRNAQKVDVISLKDGRKVASLERVNEAGLFAGTLGRRVKPFLYALRVVYPLCELDIIDPYQFGSLLDSQDLYLFGEGSSEQAYRFLGANWRQVDSVEGVHFCVWAPNAKRVSVVGDFNHWDDTRHVMRQHMANGLWEIFLPDVAEGTHYKFDLVYQNGERHAKSDPMATQMECAPHNASIVPKKHQHPWADTQWMHKRATTAWHRAAMSIYEVQLGSWRRKGEFGEQYFDYQDLIEQLIPYVKEQGFTHIELMPVSEYPFDGSWGYQPVGLYAPTHRFGDANGLKAFIDACHQAEIGVLLDWVAAHFPKDPHGLVRFDGTCLYEHEDPRKGTHPDWDTLIYNYDRGEVRSFLLSNACYWLREFHLDGLRLDAVSSMLYLDYSREPGQWLPNAYGGRENLEAIHFLQMLNQRLYQAFPGICMIAEESTAFAGVTKPTDSGGLGFGFKWNMGWMNDSLSYLGRDPIYRQYHHNQLTFSLMYAYSEQFMLSISHDEVVHGKGSLLHKIPGDDWQKFATLKAYYGFMWGHPGKKLLFMGSEFAQRDEWNHNHSLDWHLLAFEPHQGVQRWLRDLNQLYRQFPALSVLDYESQGFRWLDCDNGRDSIFSFVRYGEGSDVPLVFVVNMTPTLHQGFRIGLPQGGDFCEYLNSDSHLYGGSNQGNAGKVIAEDLPWQGMASSALITVPPLGCLILGPATDAPRDTSL.

D416 acts as the Nucleophile in catalysis. Catalysis depends on E469, which acts as the Proton donor.

Belongs to the glycosyl hydrolase 13 family. GlgB subfamily. In terms of assembly, monomer.

The catalysed reaction is Transfers a segment of a (1-&gt;4)-alpha-D-glucan chain to a primary hydroxy group in a similar glucan chain.. It participates in glycan biosynthesis; glycogen biosynthesis. Catalyzes the formation of the alpha-1,6-glucosidic linkages in glycogen by scission of a 1,4-alpha-linked oligosaccharide from growing alpha-1,4-glucan chains and the subsequent attachment of the oligosaccharide to the alpha-1,6 position. The protein is 1,4-alpha-glucan branching enzyme GlgB of Shewanella sp. (strain MR-4).